Here is a 338-residue protein sequence, read N- to C-terminus: Phenylalanine--tRNA ligase alpha subunit (338 aa).

Mg(2+) is bound at residue Glu-252.

The protein belongs to the class-II aminoacyl-tRNA synthetase family. Phe-tRNA synthetase alpha subunit type 1 subfamily. Tetramer of two alpha and two beta subunits. Mg(2+) is required as a cofactor.

The protein resides in the cytoplasm. The enzyme catalyses tRNA(Phe) + L-phenylalanine + ATP = L-phenylalanyl-tRNA(Phe) + AMP + diphosphate + H(+). The protein is Phenylalanine--tRNA ligase alpha subunit of Pseudomonas fluorescens (strain SBW25).